Reading from the N-terminus, the 444-residue chain is 23S rRNA (uracil(1939)-C(5))-methyltransferase RlmD (444 aa).

Residues 5 to 67 form the TRAM domain; it reads RNRFDRTPFQ…RHFDEAKTVE (63 aa). [4Fe-4S] cluster contacts are provided by C80, C86, C89, and C168. S-adenosyl-L-methionine is bound by residues Q276, F305, N310, E326, D353, and D374. Residue C400 is the Nucleophile of the active site.

The protein belongs to the class I-like SAM-binding methyltransferase superfamily. RNA M5U methyltransferase family. RlmD subfamily.

The catalysed reaction is uridine(1939) in 23S rRNA + S-adenosyl-L-methionine = 5-methyluridine(1939) in 23S rRNA + S-adenosyl-L-homocysteine + H(+). In terms of biological role, catalyzes the formation of 5-methyl-uridine at position 1939 (m5U1939) in 23S rRNA. The protein is 23S rRNA (uracil(1939)-C(5))-methyltransferase RlmD of Xanthomonas oryzae pv. oryzae (strain MAFF 311018).